The sequence spans 253 residues: MFNNYGNVMMTDQFRKVEQYSPKSSPRAGGAGGRSPVVARQDSSGTLKTTIQLGKNPSIVHSGPFYLMKEPPGEGELTGATNLMAHYGLEHSYSKFSGKKVKEQLSSFLPNLPGVIDGPGHLDNSSLRSVIEKPPIGGKDLLPLTSVQLAGFRLHPGPLPEQYKHLKSVPTRKHKNKHKKHKYKEGVAPLSEQSALEASGLDTHEKKHKKQKRHEDDKERKKRKKEKKRKKQRHSPEHPGSGAASMPPQTQVF.

2 disordered regions span residues 18–49 (EQYS…TLKT) and 157–253 (GPLP…TQVF). Low complexity predominate over residues 21 to 40 (SPKSSPRAGGAGGRSPVVAR). Composition is skewed to basic residues over residues 165-183 (HLKS…KHKY) and 220-233 (RKKR…KKQR).

The protein belongs to the Mediator complex subunit 19 family. As to quaternary structure, component of the Mediator complex.

The protein resides in the nucleus. Its function is as follows. Component of the Mediator complex, a coactivator involved in the regulated transcription of nearly all RNA polymerase II-dependent genes. Mediator functions as a bridge to convey information from gene-specific regulatory proteins to the basal RNA polymerase II transcription machinery. Mediator is recruited to promoters by direct interactions with regulatory proteins and serves as a scaffold for the assembly of a functional preinitiation complex with RNA polymerase II and the general transcription factors. The polypeptide is Mediator of RNA polymerase II transcription subunit 19 (MED19) (Aedes aegypti (Yellowfever mosquito)).